The chain runs to 88 residues: Small ribosomal subunit protein uS17 (88 aa).

The protein belongs to the universal ribosomal protein uS17 family. Part of the 30S ribosomal subunit.

One of the primary rRNA binding proteins, it binds specifically to the 5'-end of 16S ribosomal RNA. This is Small ribosomal subunit protein uS17 from Synechococcus sp. (strain WH7803).